The following is a 611-amino-acid chain: Guanylate-binding protein 6 (611 aa).

Residues Met-1 to Cys-308 form a GTPase domain (Globular) region. The GB1/RHD3-type G domain occupies Ser-33–Lys-275. GTP is bound by residues Gly-43–Ser-50, Leu-65–Ser-67, and Asp-95–Leu-99.

The protein belongs to the TRAFAC class dynamin-like GTPase superfamily. GB1/RHD3 GTPase family. GB1 subfamily.

It is found in the cytoplasmic vesicle. The enzyme catalyses GTP + H2O = GDP + phosphate + H(+). Interferon (IFN)-inducible GTPase that plays important roles in innate immunity against a diverse range of bacterial, viral and protozoan pathogens, such as bacterial pathogens Listeria monocytogenes and Mycobacterium bovis BCG as well as the protozoan pathogen Toxoplasma gondii. Confers protection to several pathogens, including the bacterial pathogens Listeria monocytogenes and Mycobacterium bovis BCG as well as the protozoan pathogen Toxoplasma gondii. This Mus musculus (Mouse) protein is Guanylate-binding protein 6 (Gbp6).